A 350-amino-acid chain; its full sequence is Probable dual-specificity RNA methyltransferase RlmN (350 aa).

The active-site Proton acceptor is the Glu91. Residues 97-327 (YHHGNSVCIS…VTIRREMGRD (231 aa)) form the Radical SAM core domain. Residues Cys104 and Cys332 are joined by a disulfide bond. 3 residues coordinate [4Fe-4S] cluster: Cys111, Cys115, and Cys118. Residues 158–159 (GE), Ser190, 213–215 (SLH), and Asn289 each bind S-adenosyl-L-methionine. Cys332 acts as the S-methylcysteine intermediate in catalysis.

It belongs to the radical SAM superfamily. RlmN family. [4Fe-4S] cluster serves as cofactor.

It localises to the cytoplasm. The catalysed reaction is adenosine(2503) in 23S rRNA + 2 reduced [2Fe-2S]-[ferredoxin] + 2 S-adenosyl-L-methionine = 2-methyladenosine(2503) in 23S rRNA + 5'-deoxyadenosine + L-methionine + 2 oxidized [2Fe-2S]-[ferredoxin] + S-adenosyl-L-homocysteine. It carries out the reaction adenosine(37) in tRNA + 2 reduced [2Fe-2S]-[ferredoxin] + 2 S-adenosyl-L-methionine = 2-methyladenosine(37) in tRNA + 5'-deoxyadenosine + L-methionine + 2 oxidized [2Fe-2S]-[ferredoxin] + S-adenosyl-L-homocysteine. In terms of biological role, specifically methylates position 2 of adenine 2503 in 23S rRNA and position 2 of adenine 37 in tRNAs. The polypeptide is Probable dual-specificity RNA methyltransferase RlmN (Lachnospira eligens (strain ATCC 27750 / DSM 3376 / VPI C15-48 / C15-B4) (Eubacterium eligens)).